A 708-amino-acid chain; its full sequence is Leukotoxin translocation ATP-binding protein LktB (708 aa).

One can recognise a Peptidase C39 domain in the interval 1 to 126; sequence MEANHQRNDL…ACYQGQLILV (126 aa). The ABC transmembrane type-1 domain occupies 155–437; that stretch reads FLETLIVSIF…LAQLWQDFQQ (283 aa). The next 5 helical transmembrane spans lie at 159 to 179, 192 to 212, 270 to 290, 296 to 316, and 389 to 409; these read LIVS…FQVV, LNII…LSGL, ALTS…MWYY, LVIL…SPIL, and VMVI…LSIG. The ABC transporter domain maps to 469 to 704; it reads ISFKNIRFRY…SNGLYSYLHQ (236 aa). 503–510 is an ATP binding site; that stretch reads GRSGSGKS.

This sequence belongs to the ABC transporter superfamily. Protein-1 exporter (TC 3.A.1.109) family. As to quaternary structure, homodimer.

The protein localises to the cell inner membrane. The enzyme catalyses ATP + H2O + proteinSide 1 = ADP + phosphate + proteinSide 2.. Part of the ABC transporter complex LktBD involved in leukotoxin export. Transmembrane domains (TMD) form a pore in the inner membrane and the ATP-binding domain (NBD) is responsible for energy generation. This is Leukotoxin translocation ATP-binding protein LktB (lktB) from Bibersteinia trehalosi (Pasteurella trehalosi).